Reading from the N-terminus, the 330-residue chain is Tryptophan--tRNA ligase (330 aa).

ATP contacts are provided by residues 10–12 and 18–19; these read QTT and GN. Residues 11–19 carry the 'HIGH' region motif; sequence TTGALHLGN. D134 serves as a coordination point for L-tryptophan. Residues 146–148, I186, and 195–199 each bind ATP; these read GED and KMSKS. A 'KMSKS' region motif is present at residues 195–199; it reads KMSKS.

It belongs to the class-I aminoacyl-tRNA synthetase family. Homodimer.

It is found in the cytoplasm. The catalysed reaction is tRNA(Trp) + L-tryptophan + ATP = L-tryptophyl-tRNA(Trp) + AMP + diphosphate + H(+). Functionally, catalyzes the attachment of tryptophan to tRNA(Trp). This chain is Tryptophan--tRNA ligase, found in Rickettsia prowazekii (strain Madrid E).